Consider the following 59-residue polypeptide: uncharacterized protein (59 aa).

This is an uncharacterized protein from Treponema pallidum (strain Nichols).